The sequence spans 1105 residues: KAT8 regulatory NSL complex subunit 1 (1105 aa).

Position 104 is an N6-acetyllysine (K104). Disordered regions lie at residues 145–211 (GQTA…CTLP) and 225–263 (NNST…GVKL). The segment covering 225–258 (NNSTANKSSVNSMEQPALQGSSRLSPGTDSSSNL) has biased composition (polar residues). S249 is subject to Phosphoserine. A Glycyl lysine isopeptide (Lys-Gly) (interchain with G-Cter in SUMO2) cross-link involves residue K262. The residue at position 268 (S268) is a Phosphoserine. A coiled-coil region spans residues 283–314 (RITALLRRQADIESRARRLQKRLQVVQAKQVE). K331 participates in a covalent cross-link: Glycyl lysine isopeptide (Lys-Gly) (interchain with G-Cter in SUMO2). Disordered regions lie at residues 399-426 (DSDV…PEQR) and 733-857 (TAKL…RRGE). 2 stretches are compositionally biased toward basic and acidic residues: residues 741 to 753 (TRPD…HLDD) and 780 to 804 (DPNH…HHTD). Over residues 827-850 (STSSDSPAPASSSSQVTASTSQQP) the composition is skewed to low complexity. The interval 850–882 (PVRRRRGESSFDINNIVIPMSVAATTRVEKLQY) is required for activation of KAT8 histone acetyltransferase activity. Residues 884 to 1035 (EILTPSWREV…GLDEQSVQPW (152 aa)) form the PEHE domain. The tract at residues 910-928 (EDLSDAAFAALHAKCEEME) is interaction with KAT8 HAT domain. A disordered region spans residues 938–1034 (VPPQRRGSRS…LGLDEQSVQP (97 aa)). Polar residues predominate over residues 955-965 (TTPQLGSANPS). Residues 975–988 (SSSHSLSEYSHGQS) are compositionally biased toward low complexity. S991 and S994 each carry phosphoserine. T1003 is subject to Phosphothreonine. Residues 1008–1019 (DTPRHLASEDTR) show a composition bias toward basic and acidic residues. S1045 is modified (phosphoserine). A disordered region spans residues 1058–1105 (ERAARCTRRTSGSKTGRETEAAPTSPPIVPLKSRHLVAAATAQRPTHR).

As to quaternary structure, component of the NSL complex at least composed of MOF/KAT8, KANSL1, KANSL2, KANSL3, MCRS1, PHF20, OGT1/OGT, WDR5 and HCFC1. Interacts (via PEHE domain) with KAT8 (via HAT domain); the interaction is direct. Component of some MLL1/MLL complex, at least composed of the core components KMT2A/MLL1, ASH2L, HCFC1, WDR5 and RBBP5, as well as the facultative components BACC1, CHD8, E2F6, HSP70, INO80C, KANSL1, LAS1L, MAX, MCRS1, MGA, KAT8/MOF, PELP1, PHF20, PRP31, RING2, RUVB1/TIP49A, RUVB2/TIP49B, SENP3, TAF1, TAF4, TAF6, TAF7, TAF9 and TEX10. Expressed in the brain.

Its subcellular location is the nucleus. The protein resides in the chromosome. It is found in the centromere. It localises to the kinetochore. The protein localises to the mitochondrion. Its subcellular location is the cytoplasm. The protein resides in the cytoskeleton. It is found in the spindle pole. Functionally, non-catalytic component of the NSL histone acetyltransferase complex, a multiprotein complex that mediates histone H4 acetylation at 'Lys-5'- and 'Lys-8' (H4K5ac and H4K8ac) at transcription start sites and promotes transcription initiation. The NSL complex also acts as a regulator of gene expression in mitochondria. In addition to its role in transcription, KANSL1 also plays an essential role in spindle assembly during mitosis. Associates with microtubule ends and contributes to microtubule stability. The protein is KAT8 regulatory NSL complex subunit 1 (KANSL1) of Homo sapiens (Human).